The following is a 630-amino-acid chain: MITYNGGNYDVVVVGAGHAGCEAALATARMGYSTMMLTMSLDAIAMLPCNPSIGGTGKGHLVREIDALGGEMGLNIDKTFIQSRMLNTAKGPAVHSLRAQADKTRYHIEMKKMLENEPNLHLLQGEVVDIIVEDNTVKGVVTKTGAIYYGKAVILATGVYLKSKIFMGEVNYESGPNGLFPALYLSEKLKALGCNMRRFKTGTPARIHKDSIDFSKVSVQIEDEEIVPFSFMNEALEKEQIPCWLTRTTEETHRIIKENLGRSAMYRGDIESTGPRYCPSIEDKIVRFSEKPSHQIFIEPEGAETKEMYIQGFSTSLPEEVQVQMVRSVIGLENAIIMRPAYAIEYDCIDPTQLKASLEVKHINNLFSAGQFNGSSGYEEAAAQGLMAGINAVLKIRGEDPFILDRSEAYIGVLIDDLVTKGTNEPYRMMTSRSEYRLVLRQDNADLRLTEKGYALGLVKEDRYERYLLKKEHIKNEMERLKTTNVSPTIANPVLERAESTPIKVGMSLYDLLKRPELTYENIKEIDGTRPQDLMKDAQFQCEVMIKYEGYIEKQLRQIDQFKKLENKKLREDIDYNEIDGLRIEARQKLNAIRPLSVGQASRISGVSPADISVLLIYLEQKRRKKGEVE.

Position 15 to 20 (15 to 20 (GAGHAG)) interacts with FAD. 274-288 (GPRYCPSIEDKIVRF) serves as a coordination point for NAD(+).

Belongs to the MnmG family. In terms of assembly, homodimer. Heterotetramer of two MnmE and two MnmG subunits. Requires FAD as cofactor.

The protein localises to the cytoplasm. Its function is as follows. NAD-binding protein involved in the addition of a carboxymethylaminomethyl (cmnm) group at the wobble position (U34) of certain tRNAs, forming tRNA-cmnm(5)s(2)U34. This is tRNA uridine 5-carboxymethylaminomethyl modification enzyme MnmG from Alkaliphilus oremlandii (strain OhILAs) (Clostridium oremlandii (strain OhILAs)).